The following is a 624-amino-acid chain: Chaperone protein HtpG (624 aa).

Residues 1 to 336 (MKGQETRGFQ…SNDLPLNVSR (336 aa)) are a; substrate-binding. Residues 337–552 (EILQDSTVTR…ADEMSTQMAK (216 aa)) form a b region. Residues 553–624 (LFAAAGQSVP…IRRMNQLLVS (72 aa)) form a c region.

The protein belongs to the heat shock protein 90 family. Homodimer.

Its subcellular location is the cytoplasm. Functionally, molecular chaperone. Has ATPase activity. The polypeptide is Chaperone protein HtpG (Salmonella choleraesuis (strain SC-B67)).